The chain runs to 239 residues: Retrotransposon Gag-like protein 6 (239 aa).

Residues 29-69 are a coiled coil; the sequence is LTSLRLTNSALRREASTLRAEKANLTNMLESVMAELTLLRT. The segment covering 82 to 94 has biased composition (polar residues); the sequence is PISSITSNGTRPM. Disordered regions lie at residues 82-106 and 214-239; these read PISS…EPFS and TGPC…ARNL. Low complexity predominate over residues 228 to 239; the sequence is PAPALPARARNL.

The protein belongs to the LDOC1 family.

The chain is Retrotransposon Gag-like protein 6 from Homo sapiens (Human).